A 1366-amino-acid polypeptide reads, in one-letter code: DNA-directed RNA polymerase subunit beta' (1366 aa).

Residues 1–23 (MTSSKPKKSSRVRKTTKNSKKNH) show a composition bias toward basic residues. The disordered stretch occupies residues 1 to 37 (MTSSKPKKSSRVRKTTKNSKKNHNTMMPLLPKTPPSF). Positions 248, 315, 322, and 325 each coordinate Zn(2+). Positions 1304–1366 (TAILDDPSDE…LQEEGLLSDG (63 aa)) are disordered. Over residues 1354–1366 (LEGLQEEGLLSDG) the composition is skewed to low complexity.

The protein belongs to the RNA polymerase beta' chain family. RpoC2 subfamily. In terms of assembly, in cyanobacteria the RNAP catalytic core is composed of 2 alpha, 1 beta, 1 beta', 1 gamma and 1 omega subunit. When a sigma factor is associated with the core the holoenzyme is formed, which can initiate transcription. The cofactor is Zn(2+).

The enzyme catalyses RNA(n) + a ribonucleoside 5'-triphosphate = RNA(n+1) + diphosphate. Functionally, DNA-dependent RNA polymerase catalyzes the transcription of DNA into RNA using the four ribonucleoside triphosphates as substrates. The protein is DNA-directed RNA polymerase subunit beta' of Prochlorococcus marinus subsp. pastoris (strain CCMP1986 / NIES-2087 / MED4).